A 399-amino-acid chain; its full sequence is CCA-adding enzyme (399 aa).

Residues Gly-32 and Arg-35 each coordinate ATP. Residues Gly-32 and Arg-35 each coordinate CTP. 2 residues coordinate Mg(2+): Asp-45 and Asp-47. ATP contacts are provided by Arg-116, Asp-159, Arg-162, Arg-165, and Arg-168. CTP is bound by residues Arg-116, Asp-159, Arg-162, Arg-165, and Arg-168.

It belongs to the tRNA nucleotidyltransferase/poly(A) polymerase family. Bacterial CCA-adding enzyme type 3 subfamily. As to quaternary structure, homodimer. Mg(2+) serves as cofactor.

It catalyses the reaction a tRNA precursor + 2 CTP + ATP = a tRNA with a 3' CCA end + 3 diphosphate. It carries out the reaction a tRNA with a 3' CCA end + 2 CTP + ATP = a tRNA with a 3' CCACCA end + 3 diphosphate. Catalyzes the addition and repair of the essential 3'-terminal CCA sequence in tRNAs without using a nucleic acid template. Adds these three nucleotides in the order of C, C, and A to the tRNA nucleotide-73, using CTP and ATP as substrates and producing inorganic pyrophosphate. tRNA 3'-terminal CCA addition is required both for tRNA processing and repair. Also involved in tRNA surveillance by mediating tandem CCA addition to generate a CCACCA at the 3' terminus of unstable tRNAs. While stable tRNAs receive only 3'-terminal CCA, unstable tRNAs are marked with CCACCA and rapidly degraded. The sequence is that of CCA-adding enzyme from Streptococcus sanguinis (strain SK36).